The sequence spans 166 residues: NADH-quinone oxidoreductase subunit B (166 aa).

The [4Fe-4S] cluster site is built by Cys-44, Cys-45, Cys-110, and Cys-140.

It belongs to the complex I 20 kDa subunit family. As to quaternary structure, NDH-1 is composed of 14 different subunits. Subunits NuoB, C, D, E, F, and G constitute the peripheral sector of the complex. Requires [4Fe-4S] cluster as cofactor.

It is found in the cell membrane. It catalyses the reaction a quinone + NADH + 5 H(+)(in) = a quinol + NAD(+) + 4 H(+)(out). Its function is as follows. NDH-1 shuttles electrons from NADH, via FMN and iron-sulfur (Fe-S) centers, to quinones in the respiratory chain. The immediate electron acceptor for the enzyme in this species is believed to be a menaquinone. Couples the redox reaction to proton translocation (for every two electrons transferred, four hydrogen ions are translocated across the cytoplasmic membrane), and thus conserves the redox energy in a proton gradient. The polypeptide is NADH-quinone oxidoreductase subunit B (Carboxydothermus hydrogenoformans (strain ATCC BAA-161 / DSM 6008 / Z-2901)).